A 114-amino-acid chain; its full sequence is DNA polymerase epsilon subunit C (114 aa).

The tract at residues 91 to 114 is disordered; that stretch reads PDAVAPATGEEEQPKRRGRKPAQE.

Heterotetramer. Consists of four subunits: POL2, DPB2, DPB3 and DPB4.

It is found in the nucleus. Functionally, as accessory component of the DNA polymerase epsilon (DNA polymerase II) participates in chromosomal DNA replication. The protein is DNA polymerase epsilon subunit C (DPB3) of Yarrowia lipolytica (strain CLIB 122 / E 150) (Yeast).